Reading from the N-terminus, the 342-residue chain is Nucleoid-associated protein SO_2177 (342 aa).

This sequence belongs to the YejK family.

Its subcellular location is the cytoplasm. It localises to the nucleoid. In Shewanella oneidensis (strain ATCC 700550 / JCM 31522 / CIP 106686 / LMG 19005 / NCIMB 14063 / MR-1), this protein is Nucleoid-associated protein SO_2177.